The sequence spans 512 residues: Sodium-dependent phosphate transport protein 1, chloroplastic (512 aa).

The transit peptide at 1–59 (MNARALLCSSNIHSLYTSNRPPEKTSSSRSLRNLKPSPKSLRVWIYPRNRSSVFRVLVR) directs the protein to the chloroplast. Helical transmembrane passes span 103–123 (WVIV…RVNM), 141–161 (VGLI…AGGI), 171–191 (VLGF…VAAK), 192–212 (LGLP…GVAM), 234–254 (LVYS…PFLI), 257–277 (FGWP…LTLW), 323–343 (VWAL…LLTW), 361–381 (LLSV…GWIA), 401–421 (IGFL…SPTM), 453–473 (GVLL…GTAA), and 486–506 (VFTI…LFST).

It belongs to the major facilitator superfamily. Sodium/anion cotransporter (TC 2.A.1.14) family. As to expression, expressed in flower buds, sepals of mature flowers and mature leaves, less in senescent leaves and at low levels in roots.

It localises to the plastid. The protein localises to the chloroplast thylakoid membrane. In terms of biological role, specific for inorganic phosphate transport across the thylakoid membrane in a sodium dependent manner. Binds glutamate but cannot transport it. May act as an ascorbate transporter at the thylakoid membrane. The polypeptide is Sodium-dependent phosphate transport protein 1, chloroplastic (ANTR1) (Arabidopsis thaliana (Mouse-ear cress)).